The sequence spans 1463 residues: Nitric oxide synthase 1 (1463 aa).

The interval 1–200 is interaction with NOSIP; that stretch reads MESHMFSVQQ…LQGSGENNKL (200 aa). Positions 17–99 constitute a PDZ domain; it reads SVRLFKRKVG…ETHVVLILRG (83 aa). Disordered regions lie at residues 110-194, 215-250, and 268-298; these read TFTG…LQGS, GKAINGGGPAKTETKDVEVQVDRDPDSKSHKPLPLG, and VVLNNPYSEKEQPSASGKQSPTKNGSPSKCP. A DYNLL1/PIN/nNOS-inhibiting protein-binding region spans residues 158-240; the sequence is PDPGQEASSL…VEVQVDRDPD (83 aa). Positions 226-243 are enriched in basic and acidic residues; the sequence is TETKDVEVQVDRDPDSKS. Residues 280 to 294 are compositionally biased toward polar residues; it reads PSASGKQSPTKNGSP. (6R)-L-erythro-5,6,7,8-tetrahydrobiopterin is bound at residue serine 334. Cysteine 415 serves as a coordination point for heme b. Glutamine 478, tryptophan 587, tyrosine 588, and glutamate 592 together coordinate L-arginine. The (6R)-L-erythro-5,6,7,8-tetrahydrobiopterin site is built by valine 677, tryptophan 678, and phenylalanine 691. Heme b is bound at residue tyrosine 706. The calmodulin-binding stretch occupies residues 725–745; it reads KRRAIGFKKLAEAVKFSAKLM. Residues 755-969 form the Flavodoxin-like domain; it reads ATILYATETG…AFRTWAKKVF (215 aa). Residues threonine 761, glutamate 762, threonine 763, lysine 765, serine 766, serine 807, threonine 808, and glycine 812 each contribute to the FMN site. Residues serine 881, serine 891, and serine 892 each carry the phosphoserine modification. Positions 920, 925, 927, 953, and 957 each coordinate FMN. The FAD-binding FR-type domain maps to 1024–1271; sequence KRVSAARLLS…VRGAPSFHLP (248 aa). An NADP(+)-binding site is contributed by arginine 1044. Residues histidine 1066, arginine 1207, tyrosine 1208, tyrosine 1209, serine 1210, threonine 1225, and alanine 1227 each contribute to the FAD site. Serine 1230 is an NADP(+) binding site. Tyrosine 1231, valine 1244, cysteine 1245, and serine 1246 together coordinate FAD. NADP(+) is bound by residues threonine 1285, arginine 1318, serine 1347, arginine 1348, lysine 1354, tyrosine 1356, glutamine 1358, aspartate 1391, threonine 1432, and arginine 1434.

This sequence belongs to the NOS family. In terms of assembly, homodimer. Interacts with DLG4; the interaction possibly being prevented by the association between NOS1 and CAPON. Forms a ternary complex with CAPON and RASD1. Forms a ternary complex with CAPON and SYN1. Interacts with ZDHHC23. Interacts with NOSIP; which may impair its synaptic location. Interacts with HTR4. Interacts with SLC6A4. Interacts with VAC14. Interacts (via N-terminal domain) with DLG4 (via N-terminal tandem pair of PDZ domains). Interacts with SLC6A4. Forms a complex with ASL, ASS1 and SLC7A1; the complex regulates cell-autonomous L-arginine synthesis and citrulline recycling while channeling extracellular L-arginine to nitric oxide synthesis pathway. Interacts with DMD; localizes NOS1 to sarcolemma in muscle cells. Interacts with DYNLL1; inhibits the nitric oxide synthase activity. Heme b serves as cofactor. Requires FAD as cofactor. The cofactor is FMN. It depends on (6R)-L-erythro-5,6,7,8-tetrahydrobiopterin as a cofactor. In terms of processing, ubiquitinated; mediated by STUB1/CHIP in the presence of Hsp70 and Hsp40 (in vitro).

Its subcellular location is the cell membrane. The protein localises to the sarcolemma. It is found in the cell projection. It localises to the dendritic spine. The enzyme catalyses 2 L-arginine + 3 NADPH + 4 O2 + H(+) = 2 L-citrulline + 2 nitric oxide + 3 NADP(+) + 4 H2O. With respect to regulation, stimulated by calcium/calmodulin. Inhibited by DYNLL1 that prevents the dimerization of the protein. Inhibited by NOSIP. In terms of biological role, produces nitric oxide (NO) which is a messenger molecule with diverse functions throughout the body. In the brain and peripheral nervous system, NO displays many properties of a neurotransmitter. Probably has nitrosylase activity and mediates cysteine S-nitrosylation of cytoplasmic target proteins such SRR. In Ovis aries (Sheep), this protein is Nitric oxide synthase 1 (NOS1).